The following is a 117-amino-acid chain: Large ribosomal subunit protein bL20 (117 aa).

This sequence belongs to the bacterial ribosomal protein bL20 family.

In terms of biological role, binds directly to 23S ribosomal RNA and is necessary for the in vitro assembly process of the 50S ribosomal subunit. It is not involved in the protein synthesizing functions of that subunit. The protein is Large ribosomal subunit protein bL20 of Rickettsia bellii (strain OSU 85-389).